Reading from the N-terminus, the 334-residue chain is Protein-methionine-sulfoxide reductase catalytic subunit MsrP (334 aa).

Positions 1-44 (MKKNQFLKESDVTAESVFFMKRRQVLKALGISAAALSLPHAAHA) form a signal peptide, tat-type signal. Mo-molybdopterin-binding positions include Asn88, 91–92 (YE), Cys146, Thr181, Asn233, Arg238, and 249–251 (GIK).

This sequence belongs to the MsrP family. As to quaternary structure, heterodimer of a catalytic subunit (MsrP) and a heme-binding subunit (MsrQ). The cofactor is Mo-molybdopterin. Predicted to be exported by the Tat system. The position of the signal peptide cleavage has not been experimentally proven.

It localises to the periplasm. The enzyme catalyses L-methionyl-[protein] + a quinone + H2O = L-methionyl-(S)-S-oxide-[protein] + a quinol. The catalysed reaction is L-methionyl-[protein] + a quinone + H2O = L-methionyl-(R)-S-oxide-[protein] + a quinol. In terms of biological role, part of the MsrPQ system that repairs oxidized periplasmic proteins containing methionine sulfoxide residues (Met-O), using respiratory chain electrons. Thus protects these proteins from oxidative-stress damage caused by reactive species of oxygen and chlorine generated by the host defense mechanisms. MsrPQ is essential for the maintenance of envelope integrity under bleach stress, rescuing a wide series of structurally unrelated periplasmic proteins from methionine oxidation, including the primary periplasmic chaperone SurA and the lipoprotein Pal. The catalytic subunit MsrP is non-stereospecific, being able to reduce both (R-) and (S-) diastereoisomers of methionine sulfoxide. The polypeptide is Protein-methionine-sulfoxide reductase catalytic subunit MsrP (Escherichia coli (strain UTI89 / UPEC)).